Reading from the N-terminus, the 123-residue chain is SPbeta prophage-derived uncharacterized protein YorE (123 aa).

The protein is SPbeta prophage-derived uncharacterized protein YorE (yorE) of Bacillus subtilis (strain 168).